The sequence spans 178 residues: Ribulose bisphosphate carboxylase small subunit, chloroplastic (178 aa).

The N-terminal 54 residues, 1–54 (MASISSSVATVSRTAPAQANMVAPFTGLKSNAAFPTTKKANDFSTLPSNGGRVQ), are a transit peptide targeting the chloroplast.

Belongs to the RuBisCO small chain family. As to quaternary structure, heterohexadecamer of 8 large and 8 small subunits.

It localises to the plastid. The protein localises to the chloroplast. In terms of biological role, ruBisCO catalyzes two reactions: the carboxylation of D-ribulose 1,5-bisphosphate, the primary event in carbon dioxide fixation, as well as the oxidative fragmentation of the pentose substrate. Both reactions occur simultaneously and in competition at the same active site. Although the small subunit is not catalytic it is essential for maximal activity. The chain is Ribulose bisphosphate carboxylase small subunit, chloroplastic from Helianthus annuus (Common sunflower).